We begin with the raw amino-acid sequence, 358 residues long: Insulin gene enhancer protein ISL-2A (358 aa).

LIM zinc-binding domains follow at residues 27-80 (CVGC…CKRD) and 89-143 (CANC…RADH). A DNA-binding region (homeobox) is located at residues 190-249 (TTRVRTVLNEKQLHTLRTCYNANPRPDALMKEQLVEMTGLSPRVIRVWFQNKRCKDKKRS). The span at 325–335 (ESGSMGNSSGS) shows a compositional bias: low complexity. Residues 325–358 (ESGSMGNSSGSDVTSLSSQLPDTPNSMVASPVDT) are disordered. Over residues 336–358 (DVTSLSSQLPDTPNSMVASPVDT) the composition is skewed to polar residues.

The protein localises to the nucleus. Binds to one of the cis-acting domain of the insulin gene enhancer. May be involved in subtype specialization of primary motoneurons. The protein is Insulin gene enhancer protein ISL-2A (isl2a) of Oncorhynchus tshawytscha (Chinook salmon).